Here is a 166-residue protein sequence, read N- to C-terminus: Phospholipase A2 inhibitor A1 (166 aa).

The N-terminal stretch at 1 to 19 (MRLILLSGLLLLGIFLANG) is a signal peptide. A C-type lectin domain is found at 46-161 (LKGSFLIVHK…CDDNLLVVCE (116 aa)). Cystine bridges form between C83–C160 and C138–C152. N122 is a glycosylation site (N-linked (GlcNAc...) asparagine).

It belongs to the alpha-type phospholipase A2 inhibitor family. As to quaternary structure, homotrimer; non-covalently linked. In terms of tissue distribution, expressed by the liver.

It is found in the secreted. Functionally, this phospholipase A2 inhibitor binds directly phospholipase A2 in the presence or absence of calcium. This Bothrops neuwiedi (Neuwied's lancehead) protein is Phospholipase A2 inhibitor A1.